A 97-amino-acid chain; its full sequence is Large ribosomal subunit protein uL23 (97 aa).

The protein belongs to the universal ribosomal protein uL23 family. As to quaternary structure, part of the 50S ribosomal subunit. Contacts protein L29, and trigger factor when it is bound to the ribosome.

Functionally, one of the early assembly proteins it binds 23S rRNA. One of the proteins that surrounds the polypeptide exit tunnel on the outside of the ribosome. Forms the main docking site for trigger factor binding to the ribosome. In Marinobacter nauticus (strain ATCC 700491 / DSM 11845 / VT8) (Marinobacter aquaeolei), this protein is Large ribosomal subunit protein uL23.